The primary structure comprises 84 residues: Small ribosomal subunit protein uS17 (84 aa).

This sequence belongs to the universal ribosomal protein uS17 family. Part of the 30S ribosomal subunit.

In terms of biological role, one of the primary rRNA binding proteins, it binds specifically to the 5'-end of 16S ribosomal RNA. The polypeptide is Small ribosomal subunit protein uS17 (Hamiltonella defensa subsp. Acyrthosiphon pisum (strain 5AT)).